A 589-amino-acid polypeptide reads, in one-letter code: Pentalenolactone D synthase (589 aa).

FAD-binding positions include I60–G61, D82–E83, T90–W91, D102–V103, Y108, V152, and M491.

This sequence belongs to the FAD-binding monooxygenase family. Requires FAD as cofactor.

It catalyses the reaction 1-deoxy-11-oxopentalenate + NADPH + O2 + H(+) = pentalenolactone D + NADP(+) + H2O. The protein operates within antibiotic biosynthesis; pentalenolactone biosynthesis. In terms of biological role, catalyzes the flavin-dependent Baeyer-Villiger oxidation of 1-deoxy-11-oxopentalenic acid to pentalenolactone D in the biosynthesis of pentalenolactone antibiotic. This Streptomyces arenae protein is Pentalenolactone D synthase (pntE).